Reading from the N-terminus, the 169-residue chain is MKIVVYHAEECDRKKCTSLKLGRKGKFKIVSSLNQLPRGALVLNPFSEKAVSPEDRDMVLRRGIAALDCSWKKVKKSSVIFQTARNHRSLPFLVAANPTNYGKPCILSTAEAVAATLYIVGLKDIASDIMSYFKWGPHFLDLNRELLEAYSRAENSLEVVEIQKKFIGG.

S-adenosyl-L-methionine is bound by residues Thr17, Leu67, Leu90, and Thr109.

Belongs to the TDD superfamily. TSR3 family.

The protein resides in the cytoplasm. The catalysed reaction is an N(1)-methylpseudouridine in rRNA + S-adenosyl-L-methionine = N(1)-methyl-N(3)-[(3S)-3-amino-3-carboxypropyl]pseudouridine in rRNA + S-methyl-5'-thioadenosine + H(+). In terms of biological role, aminocarboxypropyltransferase that catalyzes the aminocarboxypropyl transfer on pseudouridine corresponding to position 914 in M.jannaschii 16S rRNA. It constitutes the last step in biosynthesis of the hypermodified N1-methyl-N3-(3-amino-3-carboxypropyl) pseudouridine (m1acp3-Psi). This chain is 16S rRNA aminocarboxypropyltransferase, found in Methanothermobacter thermautotrophicus (strain ATCC 29096 / DSM 1053 / JCM 10044 / NBRC 100330 / Delta H) (Methanobacterium thermoautotrophicum).